Consider the following 520-residue polypeptide: BBSome complex member BBS4 (520 aa).

A disordered region spans residues 1 to 26 (MAEVKLGMKTQVPASVESQKPRSKKA). The interval 1–66 (MAEVKLGMKT…EQLQETQGLC (66 aa)) is required for localization to centrosomes. TPR repeat units lie at residues 67-100 (EYAI…SPQC), 102-134 (DNLK…NQKD), 135-167 (WEIC…LNKH), 168-201 (DLTY…SPEN), 203-235 (ELLT…DPAN), 237-269 (KAIL…IPES), 270-303 (PPLW…APFD), 304-337 (WKIL…QPKM), 339-371 (ELYM…DKCN), and 373-408 (LVNL…LKDN). Residues 101–337 (ADNLKQVARS…SAAINFQPKM (237 aa)) are interaction with PCM1. The tract at residues 338–520 (GELYMLLAVA…TEASEQKKEK (183 aa)) is required for localization to centrosomes. A disordered region spans residues 488 to 520 (AQLPKPPSLPLEPEPEPTVEASPTEASEQKKEK).

This sequence belongs to the BBS4 family. As to quaternary structure, part of BBSome complex, that contains BBS1, BBS2, BBS4, BBS5, BBS7, BBS8/TTC8, BBS9 and BBIP10. Interacts with PCM1 and DCTN1. Interacts with DC28B. Interacts with ALDOB and C2CD3. Interacts with PKD1. Interacts with CEP290. Interacts with DLEC1. As to expression, expressed in the hippocampus and dentate gyrus, the columnar epithelial cells of bronchioles, the olfactory epithelium and the inner segment and outer nuclear layer of the retina. Expressed in testis.

Its subcellular location is the cytoplasm. It is found in the cytoskeleton. It localises to the microtubule organizing center. The protein localises to the centrosome. The protein resides in the cell projection. Its subcellular location is the cilium membrane. It is found in the centriolar satellite. It localises to the cilium. The protein localises to the flagellum. In terms of biological role, the BBSome complex is thought to function as a coat complex required for sorting of specific membrane proteins to the primary cilia. The BBSome complex is required for ciliogenesis but is dispensable for centriolar satellite function. This ciliogenic function is mediated in part by the Rab8 GDP/GTP exchange factor, which localizes to the basal body and contacts the BBSome. Rab8(GTP) enters the primary cilium and promotes extension of the ciliary membrane. Firstly the BBSome associates with the ciliary membrane and binds to RAB3IP/Rabin8, the guanosyl exchange factor (GEF) for Rab8 and then the Rab8-GTP localizes to the cilium and promotes docking and fusion of carrier vesicles to the base of the ciliary membrane. The BBSome complex, together with the LTZL1, controls SMO ciliary trafficking and contributes to the sonic hedgehog (SHH) pathway regulation. Required for proper BBSome complex assembly and its ciliary localization. Required for microtubule anchoring at the centrosome but not for microtubule nucleation. May be required for the dynein-mediated transport of pericentriolar proteins to the centrosome. The polypeptide is BBSome complex member BBS4 (Bbs4) (Mus musculus (Mouse)).